Here is a 422-residue protein sequence, read N- to C-terminus: Testin (422 aa).

In terms of domain architecture, PET spans 92–199; sequence MILTNPVPAK…GDVKLPSEMD (108 aa). Disordered stretches follow at residues 135-162 and 194-226; these read QPVAGSEGAQYRKKQLAKQLPAHDQDPS and LPSEMDVKPGDRSSLDGGDRGTTAEVGAVEDKS. The span at 194–212 shows a compositional bias: basic and acidic residues; the sequence is LPSEMDVKPGDRSSLDGGD. LIM zinc-binding domains lie at 234–297, 299–359, and 362–422; these read YSCY…CDSE, PRCA…NHAV, and QGCH…MMMS.

It belongs to the prickle / espinas / testin family. Interacts via LIM domain 1 with ZYX. Interacts (via LIM domain 3) with ENAH and VASP. Interacts with ALKBH4, talin, actin, alpha-actinin, GRIP1 and PXN. Interacts (via LIM domain 2) with ACTL7A (via N-terminus). Heterodimer with ACTL7A; the heterodimer interacts with ENAH to form a heterotrimer.

The protein localises to the cytoplasm. The protein resides in the cell junction. It is found in the focal adhesion. In terms of biological role, scaffold protein that may play a role in cell adhesion, cell spreading and in the reorganization of the actin cytoskeleton. Plays a role in the regulation of cell proliferation. May act as a tumor suppressor. This chain is Testin (TES), found in Monodelphis domestica (Gray short-tailed opossum).